Reading from the N-terminus, the 160-residue chain is Protein-export protein SecB (160 aa).

Belongs to the SecB family. As to quaternary structure, homotetramer, a dimer of dimers. One homotetramer interacts with 1 SecA dimer.

Its subcellular location is the cytoplasm. Functionally, one of the proteins required for the normal export of preproteins out of the cell cytoplasm. It is a molecular chaperone that binds to a subset of precursor proteins, maintaining them in a translocation-competent state. It also specifically binds to its receptor SecA. The chain is Protein-export protein SecB from Orientia tsutsugamushi (strain Boryong) (Rickettsia tsutsugamushi).